Here is a 105-residue protein sequence, read N- to C-terminus: Serine protease inhibitor Kazal-type 8 (105 aa).

A signal peptide spans 1 to 21 (MKVIFSVAVLVLASSVWTSLA). Intrachain disulfides connect cysteine 44–cysteine 78, cysteine 51–cysteine 75, and cysteine 64–cysteine 96. The 55-residue stretch at 44–98 (CIKNIQLCWILSYFKVSEPICGSNQVTYEGECHLCSGILYEDRTVIKVHDGPCEH) folds into the Kazal-like domain.

In terms of tissue distribution, expressed in epydiymis, in the cauda, corpus and caput.

The protein localises to the secreted. Its function is as follows. Probable serine protease inhibitor. The sequence is that of Serine protease inhibitor Kazal-type 8 (Spink8) from Mus musculus (Mouse).